The following is a 94-amino-acid chain: Defensin alpha 5 (94 aa).

The first 19 residues, 1–19, serve as a signal peptide directing secretion; the sequence is MRTIAILAAILLVALQAQA. 3 cysteine pairs are disulfide-bonded: Cys-65–Cys-93, Cys-67–Cys-82, and Cys-72–Cys-92.

This sequence belongs to the alpha-defensin family. In terms of assembly, homodimer. Homotetramer. Interacts with B.antracis lef/lethal factor. Post-translationally, glycosylated. In terms of processing, proteolytically cleaved at Arg-62 by trypsin. Both the propeptide form proHD5/HD5(20-94) and HD5(56-94) are cleaved into the lumenal peptide form HD5(63-94) by trypsin. Unprocessed proHD5 exerts antimicrobial activities, but peptide potency is enhanced by peptide processing. Proteolytically cleaved in duodenal fluid; derived fragments are antimicrobially active against commensal bacteria (in vitro). (Microbial infection) The disulfide bridges and homodimerization are a prerequisite for the enhancement of S.flexneri adhesion and invasion. As to expression, expressed in the gastrointestinal, reproductive, and urinary tracts (at protein level). Expressed in Paneth cells of the small intestine (at protein level). Expressed throughout the urothelium of the lower urinary tract and in the collecting tubules of the kidney (at protein level). Expressed in stratified squamous epithelial cells of the female genital tract epithelia, such as in vagina, ectocervix, endocervix, endometrium, and fallopian tube (at protein level). Endometrial expression correlates with stages of the menstrual cycle: Expression is low during the early proliferative phase, increased during the mid- to late proliferative phase, peaks during the early secretory phase of the cycle, and decreases during the mid- to late secretory phase.

The protein resides in the secreted. Its subcellular location is the cytoplasmic vesicle. It is found in the secretory vesicle. Its function is as follows. Host-defense peptide that maintains sterility in the urogenital system. Has antimicrobial activity against a wide range of bacteria, including Gram-negative E.coli, P.aeruginosa and S.typhimurium, and Gram-positive E.aerogenes, S.aureus, B.cereus, E.faecium and L.monocytogenes. Confers resistance to intestinal infection by S.typhimurium. Exhibits antimicrobial activity against enteric commensal bacteria such as B.adolescentis, L.acidophilus, B.breve, L.fermentum, B.longum and S.thermophilus. Binds to bacterial membranes and causes membrane disintegration. Induces the secretion of the chemokine IL-8 by intestinal epithelial cells. Binds to B.antracis lef/lethal factor, a major virulence factor from B.anthracis, and neutralizes its enzymatic activity. In terms of biological role, (Microbial infection) Acts as a target for S.flexneri infection by binding to the bacterium, possibly via bacterial surface proteins, and thereby augmenting infectivity via enhanced bacterial adhesion and invasion of epithelial cells and tissues. The polypeptide is Defensin alpha 5 (DEFA5) (Homo sapiens (Human)).